Reading from the N-terminus, the 360-residue chain is GTP 3',8-cyclase (360 aa).

The region spanning 33–251 is the Radical SAM core domain; sequence RFGRSATDLR…LQPHFRLRPD (219 aa). GTP is bound at residue arginine 42. 2 residues coordinate [4Fe-4S] cluster: cysteine 49 and cysteine 53. S-adenosyl-L-methionine is bound at residue tyrosine 55. Cysteine 56 is a binding site for [4Fe-4S] cluster. Arginine 93 serves as a coordination point for GTP. Glycine 97 is a binding site for S-adenosyl-L-methionine. Threonine 124 is a GTP binding site. Serine 148 provides a ligand contact to S-adenosyl-L-methionine. GTP is bound at residue lysine 185. Residue methionine 219 coordinates S-adenosyl-L-methionine. Positions 287 and 290 each coordinate [4Fe-4S] cluster. Residue 292-294 participates in GTP binding; sequence RTR. Cysteine 304 contacts [4Fe-4S] cluster.

Belongs to the radical SAM superfamily. MoaA family. Monomer and homodimer. Requires [4Fe-4S] cluster as cofactor.

The catalysed reaction is GTP + AH2 + S-adenosyl-L-methionine = (8S)-3',8-cyclo-7,8-dihydroguanosine 5'-triphosphate + 5'-deoxyadenosine + L-methionine + A + H(+). The protein operates within cofactor biosynthesis; molybdopterin biosynthesis. Its function is as follows. Catalyzes the cyclization of GTP to (8S)-3',8-cyclo-7,8-dihydroguanosine 5'-triphosphate. The chain is GTP 3',8-cyclase from Mycobacterium marinum (strain ATCC BAA-535 / M).